A 651-amino-acid chain; its full sequence is Probable potassium transport system protein Kup (651 aa).

12 consecutive transmembrane segments (helical) span residues 41–61 (LVLG…IYAF), 82–102 (VVSL…VLFV), 130–150 (LILG…VITP), 163–183 (IVAP…LVTL), 194–214 (VAIV…ASGL), 235–255 (FLTV…LAMT), 276–296 (WLWI…AFIL), 309–329 (MIPS…TVIA), 366–386 (IYIP…VLGF), 395–415 (AYGI…YIVM), 426–446 (ALPI…ANII), and 450–470 (EGGW…WTWV).

Belongs to the HAK/KUP transporter (TC 2.A.72) family.

It is found in the cell inner membrane. It carries out the reaction K(+)(in) + H(+)(in) = K(+)(out) + H(+)(out). Transport of potassium into the cell. Likely operates as a K(+):H(+) symporter. The sequence is that of Probable potassium transport system protein Kup from Brucella melitensis biotype 2 (strain ATCC 23457).